Here is a 412-residue protein sequence, read N- to C-terminus: Yellow-related salivary protein LJM17 (412 aa).

The signal sequence occupies residues 1–18 (MRFFFVFLAIVLFQGIHG). Asn-29 carries an N-linked (GlcNAc...) asparagine glycan.

It belongs to the major royal jelly protein family. Salivary gland.

It localises to the secreted. Functionally, probably modulates blood feeding of sand flies on vertebrate species by binding and sequestering different mediators involved in the host response. Binds biogenic amines. Binds serotonin with high affinity. Binds noradrenaline but not adrenaline. Binds dopamine and octopamine. Binds histamine. Inhibits host smooth muscle contraction induced by histamine in bioassay with guinea pig ileum. Immunogenic; elicits antibody production in the host. Functions as a chemoattractant for host neutrophils; likely acts through a G-protein-coupled receptor and effect is dependent on calcium influx. This is Yellow-related salivary protein LJM17 from Lutzomyia longipalpis (Sand fly).